A 221-amino-acid chain; its full sequence is Ras-related protein Rab-28 (221 aa).

Ser-2 is subject to N-acetylserine. Ser-8 carries the phosphoserine modification. Residues Gly-21, Gly-24, Lys-25, Thr-26, Ser-27, Gly-38, Lys-39, Tyr-41, and Thr-44 each contribute to the GTP site. Thr-26 is a binding site for Mg(2+). The interval Glu-35–Phe-49 is switch I. Positions 44 and 68 each coordinate Mg(2+). Residues Asp-68–Gly-85 form a switch II region. Positions 71, 129, 130, 132, 160, and 161 each coordinate GTP. At Cys-218 the chain carries Cysteine methyl ester. Residue Cys-218 is the site of S-farnesyl cysteine attachment. Residues Ala-219–Gln-221 constitute a propeptide, removed in mature form.

This sequence belongs to the small GTPase superfamily. Rab family. In terms of assembly, interacts (prenylated form) with PDE6D; the interaction promotes RAB28 delivery to the photoreceptor outer segments. Interacts with KCNJ13; the interaction may facilitate cone outer segments phagocytosis. Also participates in nuclear factor kappa-B p65/RELA nuclear transport in endothelial cells. It depends on Mg(2+) as a cofactor. Post-translationally, isoprenylated.

It localises to the cell membrane. Its subcellular location is the cytoplasm. The protein localises to the cytoskeleton. The protein resides in the cilium basal body. It is found in the nucleus. It catalyses the reaction GTP + H2O = GDP + phosphate + H(+). With respect to regulation, regulated by guanine nucleotide exchange factors (GEFs) which promote the exchange of bound GDP for free GTP. Regulated by GTPase activating proteins (GAPs) which increase the GTP hydrolysis activity. Inhibited by GDP dissociation inhibitors (GDIs). Functionally, the small GTPases Rab are key regulators of intracellular membrane trafficking, from the formation of transport vesicles to their fusion with membranes. Rabs cycle between an inactive GDP-bound form and an active GTP-bound form that is able to recruit to membranes different sets of downstream effectors directly responsible for vesicle formation, movement, tethering and fusion. RAB28 is required for shedding and phagocytosis of cone cell outer segments (OS) discs in the retina. Also participates in nuclear factor kappa-B p65/RELA nuclear transport in endothelial cells. The chain is Ras-related protein Rab-28 (RAB28) from Pongo abelii (Sumatran orangutan).